Here is a 119-residue protein sequence, read N- to C-terminus: Chorion class CA protein ERA.3 (119 aa).

Positions 1–21 (MSYFVVFAICIQACLFHNVYS) are cleaved as a signal peptide. Residues 22–55 (QCLGRVGPGGPPLGPYGGPLGGPGYGPVGYGGCG) form a left arm region. The tract at residues 56 to 103 (GYGGSGIGNVAVAGELPVVGSSAVMGQVPVIGAVEFAGPACAVGSVSI) is central domain. Positions 104-119 (SGACGPTCGCGGLPYY) are right arm.

It belongs to the chorion protein family.

Its function is as follows. This protein is one of many from the eggshell of the silk moth. The chain is Chorion class CA protein ERA.3 (ERA.3) from Bombyx mori (Silk moth).